Reading from the N-terminus, the 206-residue chain is Probable GTP-binding protein EngB (206 aa).

Residues 23 to 202 (HTAEVAFVGR…WGALLDTFGK (180 aa)) form the EngB-type G domain. GTP contacts are provided by residues 31-38 (GRSNVGKS), 58-62 (GRTRT), 83-86 (DLPG), 150-153 (TKVD), and 181-183 (FSS). Positions 38 and 60 each coordinate Mg(2+).

It belongs to the TRAFAC class TrmE-Era-EngA-EngB-Septin-like GTPase superfamily. EngB GTPase family. Mg(2+) serves as cofactor.

Functionally, necessary for normal cell division and for the maintenance of normal septation. The chain is Probable GTP-binding protein EngB from Myxococcus xanthus (strain DK1622).